The following is a 211-amino-acid chain: 3-demethoxyubiquinol 3-hydroxylase (211 aa).

Fe cation contacts are provided by E60, E90, H93, E142, E174, and H177.

The protein belongs to the COQ7 family. The cofactor is Fe cation.

Its subcellular location is the cell membrane. It carries out the reaction a 5-methoxy-2-methyl-3-(all-trans-polyprenyl)benzene-1,4-diol + AH2 + O2 = a 3-demethylubiquinol + A + H2O. It participates in cofactor biosynthesis; ubiquinone biosynthesis. Its function is as follows. Catalyzes the hydroxylation of 2-nonaprenyl-3-methyl-6-methoxy-1,4-benzoquinol during ubiquinone biosynthesis. The chain is 3-demethoxyubiquinol 3-hydroxylase from Acinetobacter baumannii (strain AB307-0294).